Here is a 294-residue protein sequence, read N- to C-terminus: tRNA pseudouridine synthase B (294 aa).

Catalysis depends on aspartate 38, which acts as the Nucleophile.

It belongs to the pseudouridine synthase TruB family. Type 1 subfamily.

It catalyses the reaction uridine(55) in tRNA = pseudouridine(55) in tRNA. In terms of biological role, responsible for synthesis of pseudouridine from uracil-55 in the psi GC loop of transfer RNAs. The polypeptide is tRNA pseudouridine synthase B (Clostridium perfringens (strain 13 / Type A)).